The following is a 268-amino-acid chain: Tryptophan synthase alpha chain (268 aa).

Active-site proton acceptor residues include Glu-49 and Asp-60.

It belongs to the TrpA family. In terms of assembly, tetramer of two alpha and two beta chains.

The catalysed reaction is (1S,2R)-1-C-(indol-3-yl)glycerol 3-phosphate + L-serine = D-glyceraldehyde 3-phosphate + L-tryptophan + H2O. It functions in the pathway amino-acid biosynthesis; L-tryptophan biosynthesis; L-tryptophan from chorismate: step 5/5. The alpha subunit is responsible for the aldol cleavage of indoleglycerol phosphate to indole and glyceraldehyde 3-phosphate. This Xanthomonas euvesicatoria pv. vesicatoria (strain 85-10) (Xanthomonas campestris pv. vesicatoria) protein is Tryptophan synthase alpha chain.